We begin with the raw amino-acid sequence, 179 residues long: Ubiquitin-conjugating enzyme E2 C (179 aa).

The span at 1 to 14 shows a compositional bias: polar residues; the sequence is MASQNRDPAATSVT. Residues 1–31 form a disordered region; sequence MASQNRDPAATSVTAARKGAEPSGGAARGPV. A2 bears the N-acetylalanine mark. S3 carries the post-translational modification Phosphoserine. The region spanning 30–175 is the UBC core domain; the sequence is PVGKRLQQEL…LQETYSKQVT (146 aa). The active-site Glycyl thioester intermediate is the C114.

It belongs to the ubiquitin-conjugating enzyme family. Component of the APC/C complex, composed of at least 14 distinct subunits that assemble into a complex of at least 19 chains with a combined molecular mass of around 1.2 MDa. Within this complex, directly interacts with ANAPC2. Post-translationally, autoubiquitinated by the APC/C complex, leading to its degradation by the proteasome. Its degradation plays a central role in APC/C regulation, allowing cyclin-A accumulation before S phase entry. APC/C substrates inhibit the autoubiquitination of UBE2C/UBCH10 but not its E2 function, hence APC/C remaining active until its substrates have been destroyed.

The catalysed reaction is S-ubiquitinyl-[E1 ubiquitin-activating enzyme]-L-cysteine + [E2 ubiquitin-conjugating enzyme]-L-cysteine = [E1 ubiquitin-activating enzyme]-L-cysteine + S-ubiquitinyl-[E2 ubiquitin-conjugating enzyme]-L-cysteine.. It catalyses the reaction S-ubiquitinyl-[E1 ubiquitin-activating enzyme]-L-cysteine + [acceptor protein]-L-lysine = [E1 ubiquitin-activating enzyme]-L-cysteine + N(6)-monoubiquitinyl-[acceptor protein]-L-lysine.. It participates in protein modification; protein ubiquitination. In terms of biological role, accepts ubiquitin from the E1 complex and catalyzes its covalent attachment to other proteins. In vitro catalyzes 'Lys-11'- and 'Lys-48'-linked polyubiquitination. Acts as an essential factor of the anaphase promoting complex/cyclosome (APC/C), a cell cycle-regulated ubiquitin ligase that controls progression through mitosis. Acts by initiating 'Lys-11'-linked polyubiquitin chains on APC/C substrates, leading to the degradation of APC/C substrates by the proteasome and promoting mitotic exit. The chain is Ubiquitin-conjugating enzyme E2 C (UBE2C) from Macaca fascicularis (Crab-eating macaque).